The following is a 98-amino-acid chain: Beta-elicitin MGM-beta (98 aa).

Disulfide bonds link C3-C71, C27-C56, and C51-C95.

It belongs to the elicitin family.

Its subcellular location is the secreted. Functionally, induces local and distal defense responses (incompatible hypersensitive reaction) in plants from the solanaceae and cruciferae families. Elicits leaf necrosis and causes the accumulation of pathogenesis-related proteins. Might interact with the lipidic molecules of the plasma membrane. The sequence is that of Beta-elicitin MGM-beta from Phytophthora megasperma (Potato pink rot fungus).